The chain runs to 84 residues: RNA-binding protein Hfq (84 aa).

One can recognise a Sm domain in the interval 11–71 (DTFLNHVRKN…ISTIMPGHPV (61 aa)).

The protein belongs to the Hfq family. In terms of assembly, homohexamer.

RNA chaperone that binds small regulatory RNA (sRNAs) and mRNAs to facilitate mRNA translational regulation in response to envelope stress, environmental stress and changes in metabolite concentrations. Also binds with high specificity to tRNAs. The sequence is that of RNA-binding protein Hfq from Methylobacterium nodulans (strain LMG 21967 / CNCM I-2342 / ORS 2060).